Here is a 259-residue protein sequence, read N- to C-terminus: Protein FAM220A (259 aa).

Disordered stretches follow at residues 1-44 and 131-154; these read MRDR…ADAP and LGGGPRATDGHRGQCPKGEPRVSR. The segment covering 138-152 has biased composition (basic and acidic residues); the sequence is TDGHRGQCPKGEPRV.

Interacts with transcriptional activator STAT3; the interaction occurs in both the nucleus and the cytoplasm, is enhanced by IL6 and promotes STAT3 dephosphorylation, leading to negative regulation of STAT3 transcriptional activator activity. Can interact with both unphosphorylated and phosphorylated STAT3 but interacts preferentially with phosphorylated STAT3 in the nucleus. Interacts with protein phosphatase PTPN2/TC45; this promotes interaction of PTPN2 with STAT3, leading to dephosphorylation of STAT3 by PTPN2.

Its subcellular location is the nucleus. The protein localises to the cytoplasm. The protein resides in the cytoplasmic vesicle. It localises to the secretory vesicle. It is found in the acrosome. Its function is as follows. Promotes dephosphorylation of transcriptional activator STAT3 by interacting with both STAT3 and protein phosphatase PTPN2. This promotes interaction of PTPN2 with STAT3 and mediates STAT3 dephosphorylation by PTPN2, leading to negative regulation of STAT3 transcriptional activator activity. May be required for spermiogenesis or sperm function. This Homo sapiens (Human) protein is Protein FAM220A.